The chain runs to 692 residues: Elongation factor G (692 aa).

The region spanning glutamate 8 to serine 282 is the tr-type G domain. Residues alanine 17–threonine 24, aspartate 81–histidine 85, and asparagine 135–aspartate 138 each bind GTP.

It belongs to the TRAFAC class translation factor GTPase superfamily. Classic translation factor GTPase family. EF-G/EF-2 subfamily.

It is found in the cytoplasm. Functionally, catalyzes the GTP-dependent ribosomal translocation step during translation elongation. During this step, the ribosome changes from the pre-translocational (PRE) to the post-translocational (POST) state as the newly formed A-site-bound peptidyl-tRNA and P-site-bound deacylated tRNA move to the P and E sites, respectively. Catalyzes the coordinated movement of the two tRNA molecules, the mRNA and conformational changes in the ribosome. This is Elongation factor G from Nostoc punctiforme (strain ATCC 29133 / PCC 73102).